The chain runs to 306 residues: MQPPGDDAAPRCPFAGAHAPDAPHVPEAAGDDVQAGWHRAQLDFSQSMSYGDYLSLDPILDAQHPRSPDHNEMLFIIQHQTSELWMKLALYELRAALASIRDDALPPAFKMLARVSRVLEQLVQAWNVLATMTPSEYSAMRPYLGASSGFQSYQYRELEFILGNKNAQMLRPHAHRPAIHAHLEASLQAPSLYDEVIRLLARRGFPIAPERLDADWTQPTRHDRTVETAWLAVYREPNAHWELYEMAEELVDLEDAFRQWRFRHVTTVERIIGFKQGTGSTSGAPYLRKMLDVVLFPELWHVRTTL.

A disordered region spans residues 1–29 (MQPPGDDAAPRCPFAGAHAPDAPHVPEAA). Substrate-binding positions include 75–79 (FIIQH), Tyr137, and Arg141. Position 264 (His264) interacts with heme. Thr278 contacts substrate.

The protein belongs to the tryptophan 2,3-dioxygenase family. Homotetramer. Requires heme as cofactor.

It catalyses the reaction L-tryptophan + O2 = N-formyl-L-kynurenine. It functions in the pathway amino-acid degradation; L-tryptophan degradation via kynurenine pathway; L-kynurenine from L-tryptophan: step 1/2. Heme-dependent dioxygenase that catalyzes the oxidative cleavage of the L-tryptophan (L-Trp) pyrrole ring and converts L-tryptophan to N-formyl-L-kynurenine. Catalyzes the oxidative cleavage of the indole moiety. The sequence is that of Tryptophan 2,3-dioxygenase from Burkholderia mallei (strain NCTC 10247).